Consider the following 220-residue polypeptide: Deoxyribose-phosphate aldolase (220 aa).

The Proton donor/acceptor role is filled by aspartate 92. Lysine 155 acts as the Schiff-base intermediate with acetaldehyde in catalysis. The active-site Proton donor/acceptor is lysine 184.

This sequence belongs to the DeoC/FbaB aldolase family. DeoC type 1 subfamily.

It localises to the cytoplasm. It carries out the reaction 2-deoxy-D-ribose 5-phosphate = D-glyceraldehyde 3-phosphate + acetaldehyde. Its pathway is carbohydrate degradation; 2-deoxy-D-ribose 1-phosphate degradation; D-glyceraldehyde 3-phosphate and acetaldehyde from 2-deoxy-alpha-D-ribose 1-phosphate: step 2/2. Functionally, catalyzes a reversible aldol reaction between acetaldehyde and D-glyceraldehyde 3-phosphate to generate 2-deoxy-D-ribose 5-phosphate. The protein is Deoxyribose-phosphate aldolase of Natranaerobius thermophilus (strain ATCC BAA-1301 / DSM 18059 / JW/NM-WN-LF).